The chain runs to 238 residues: Protein TIFY 3A (238 aa).

In terms of domain architecture, Tify 1 spans 39–74 (EPDASTQLTIIFGGSCRVFNGVPAQKVQEIIRIAFA). The Jas 1 motif lies at 101–120 (PIARRRSLQRFLEKRRDRST). The Nuclear localization signal 1 signature appears at 103 to 110 (ARRRSLQR). The region spanning 125-160 (SMILPSQLTIIFGGSFSVFDGIPAEKVQEILHIAAA) is the Tify 2 domain. The short motif at 197–222 (PIARRRSLQRFFEKRRHRFVHTKPYS) is the Jas 2 element. Positions 199 to 206 (ARRRSLQR) match the Nuclear localization signal 2 motif. The disordered stretch occupies residues 219–238 (KPYSATTSEADKNETSPIVT).

This sequence belongs to the TIFY/JAZ family. Interacts with MYC2, MYB21, MYB24, AFPH2/NINJA, TIFY10A/JAZ1, TIFY10B/JAZ2, TIFY6B/JAZ3, TIFY6A/JAZ4, TIFY7/JAZ9 and TIFY9/JAZ10. Post-translationally, ubiquitinated. Targeted for degradation by the SCF(COI1) E3 ubiquitin ligase-proteasome pathway during jasmonate signaling.

It is found in the nucleus. Its function is as follows. Repressor of jasmonate (JA) responses. Targets MYC2, MYC3 and MYC4 that are JA-dependent transcription activators. This chain is Protein TIFY 3A (TIFY3A), found in Arabidopsis thaliana (Mouse-ear cress).